Consider the following 311-residue polypeptide: Porphobilinogen deaminase (311 aa).

Cysteine 243 is subject to S-(dipyrrolylmethanemethyl)cysteine.

It belongs to the HMBS family. In terms of assembly, monomer. Dipyrromethane is required as a cofactor.

It carries out the reaction 4 porphobilinogen + H2O = hydroxymethylbilane + 4 NH4(+). The protein operates within porphyrin-containing compound metabolism; protoporphyrin-IX biosynthesis; coproporphyrinogen-III from 5-aminolevulinate: step 2/4. Its function is as follows. Tetrapolymerization of the monopyrrole PBG into the hydroxymethylbilane pre-uroporphyrinogen in several discrete steps. The sequence is that of Porphobilinogen deaminase from Blochmanniella floridana.